The chain runs to 120 residues: Holo-[acyl-carrier-protein] synthase (120 aa).

Mg(2+)-binding residues include Asp-8 and Glu-58.

The protein belongs to the P-Pant transferase superfamily. AcpS family. Mg(2+) serves as cofactor.

It localises to the cytoplasm. It catalyses the reaction apo-[ACP] + CoA = holo-[ACP] + adenosine 3',5'-bisphosphate + H(+). Functionally, transfers the 4'-phosphopantetheine moiety from coenzyme A to a Ser of acyl-carrier-protein. The chain is Holo-[acyl-carrier-protein] synthase from Limosilactobacillus reuteri (strain DSM 20016) (Lactobacillus reuteri).